Here is a 392-residue protein sequence, read N- to C-terminus: MLLRWLARPAERCLGRGGGGGGGGGGDGLLWHAELKPHASGEYSIAVAQANAELEDQGQVVTSPAATFVGVYDGHGGPEASRFISSRLFPHLHRFASEQGGMSTDAIKRAFHATEEEFLHMVKRSWLKQPQIASVGSCCLVGAITDNVLYVANLGDSRAVLGRRGPDGREVVAERLSNDHNVAEEEVRKELTEQHPDDSRIVIYTRGVWRIKGIIQVSRSIGDVYLKKPEFARDPIFRQYVCSIPLKRPVMTAEPSIKEHQLRQQDLFLIFASDGLWEQLTDKAAVDIVFKNPRAGIAKRLVRAALTEAARKREMRYTDIKHIERGSRRNFHDDITVVVVYLDHHKHGVRPNLGNRNSFRFTNAPVDIFSGSSEEVDHHPLRLNLAMDGAVG.

The PPM-type phosphatase domain maps to 39–342; that stretch reads ASGEYSIAVA…DDITVVVVYL (304 aa). Mn(2+) is bound by residues aspartate 73, glycine 74, aspartate 274, and aspartate 333.

It belongs to the PP2C family. The cofactor is Mg(2+). Mn(2+) serves as cofactor.

It carries out the reaction O-phospho-L-seryl-[protein] + H2O = L-seryl-[protein] + phosphate. The catalysed reaction is O-phospho-L-threonyl-[protein] + H2O = L-threonyl-[protein] + phosphate. In Oryza sativa subsp. japonica (Rice), this protein is Probable protein phosphatase 2C 78.